Here is a 232-residue protein sequence, read N- to C-terminus: Phosphatidylserine decarboxylase proenzyme (232 aa).

S190 acts as the Schiff-base intermediate with substrate; via pyruvic acid in catalysis. A Pyruvic acid (Ser); by autocatalysis modification is found at S190.

It belongs to the phosphatidylserine decarboxylase family. PSD-A subfamily. As to quaternary structure, heterodimer of a large membrane-associated beta subunit and a small pyruvoyl-containing alpha subunit. The cofactor is pyruvate. Post-translationally, is synthesized initially as an inactive proenzyme. Formation of the active enzyme involves a self-maturation process in which the active site pyruvoyl group is generated from an internal serine residue via an autocatalytic post-translational modification. Two non-identical subunits are generated from the proenzyme in this reaction, and the pyruvate is formed at the N-terminus of the alpha chain, which is derived from the carboxyl end of the proenzyme. The post-translation cleavage follows an unusual pathway, termed non-hydrolytic serinolysis, in which the side chain hydroxyl group of the serine supplies its oxygen atom to form the C-terminus of the beta chain, while the remainder of the serine residue undergoes an oxidative deamination to produce ammonia and the pyruvoyl prosthetic group on the alpha chain.

The protein resides in the cell membrane. It catalyses the reaction a 1,2-diacyl-sn-glycero-3-phospho-L-serine + H(+) = a 1,2-diacyl-sn-glycero-3-phosphoethanolamine + CO2. It functions in the pathway phospholipid metabolism; phosphatidylethanolamine biosynthesis; phosphatidylethanolamine from CDP-diacylglycerol: step 2/2. In terms of biological role, catalyzes the formation of phosphatidylethanolamine (PtdEtn) from phosphatidylserine (PtdSer). The polypeptide is Phosphatidylserine decarboxylase proenzyme (Afipia carboxidovorans (strain ATCC 49405 / DSM 1227 / KCTC 32145 / OM5) (Oligotropha carboxidovorans)).